The primary structure comprises 476 residues: Alkaline phosphatase H (476 aa).

An N-terminal signal peptide occupies residues 1–26; it reads MTPGYPLALSLAVSMAVLGSALPAQA. A Mg(2+)-binding site is contributed by Asp77. Residue Asp77 coordinates Zn(2+). Catalysis depends on Ser128, which acts as the Phosphoserine intermediate. Ser128 is modified (phosphoserine). Mg(2+)-binding residues include Asp179 and Thr181. A Phosphoserine modification is found at Ser206. Mg(2+) is bound at residue Gln346. Residues Asp353, His357, Asp395, His396, and His438 each coordinate Zn(2+).

The protein belongs to the alkaline phosphatase family. Requires Mg(2+) as cofactor. The cofactor is Zn(2+).

It is found in the secreted. Its subcellular location is the periplasm. It carries out the reaction a phosphate monoester + H2O = an alcohol + phosphate. Functionally, has only phosphomonoesterase activity. The chain is Alkaline phosphatase H (phoA) from Pseudomonas aeruginosa (strain UCBPP-PA14).